Here is a 394-residue protein sequence, read N- to C-terminus: 4-hydroxybenzoate 3-monooxygenase (NAD(P)H) (394 aa).

Residues Glu32, 42-47 (TIRAGV), and Gln102 each bind FAD. Substrate is bound by residues Tyr203, 214 to 216 (STR), and Tyr224. Asp288 serves as a coordination point for FAD. Pro295 provides a ligand contact to substrate. 301-302 (LN) contributes to the FAD binding site.

The protein belongs to the aromatic-ring hydroxylase family. It depends on FAD as a cofactor.

The catalysed reaction is 4-hydroxybenzoate + NADH + O2 + H(+) = 3,4-dihydroxybenzoate + NAD(+) + H2O. It catalyses the reaction 4-hydroxybenzoate + NADPH + O2 + H(+) = 3,4-dihydroxybenzoate + NADP(+) + H2O. Functionally, involved in the degradation of 4-hydroxybenzoate (4HB) via the protocatechuate (PCA) 2,3-cleavage pathway. Catalyzes the conversion of 4HB into 2-hydroxypenta-2,4-dienoate (HPD). It is highly specific for 4-hydroxybenzoate, and is able to utilize both NADH and NADPH as electron donors at approximately equal rates. The protein is 4-hydroxybenzoate 3-monooxygenase (NAD(P)H) (praI) of Paenibacillus sp.